Reading from the N-terminus, the 325-residue chain is tRNA dimethylallyltransferase (325 aa).

11-18 (GPTASGKS) serves as a coordination point for ATP. Residue 13–18 (TASGKS) participates in substrate binding. Interaction with substrate tRNA regions lie at residues 36-39 (DSMQ) and 160-164 (QRLIR).

It belongs to the IPP transferase family. In terms of assembly, monomer. The cofactor is Mg(2+).

The enzyme catalyses adenosine(37) in tRNA + dimethylallyl diphosphate = N(6)-dimethylallyladenosine(37) in tRNA + diphosphate. Functionally, catalyzes the transfer of a dimethylallyl group onto the adenine at position 37 in tRNAs that read codons beginning with uridine, leading to the formation of N6-(dimethylallyl)adenosine (i(6)A). The protein is tRNA dimethylallyltransferase of Rickettsia canadensis (strain McKiel).